Consider the following 444-residue polypeptide: NAD(P)-specific glutamate dehydrogenase (444 aa).

Residues Lys-88, Gln-109, and Lys-112 each coordinate substrate. Catalysis depends on Lys-124, which acts as the Proton donor. Substrate is bound at residue Gly-163. Thr-207 and Asn-238 together coordinate NADP(+). Ser-376 is a substrate binding site.

It belongs to the Glu/Leu/Phe/Val dehydrogenases family. As to quaternary structure, homohexamer.

The enzyme catalyses L-glutamate + NAD(+) + H2O = 2-oxoglutarate + NH4(+) + NADH + H(+). It carries out the reaction L-glutamate + NADP(+) + H2O = 2-oxoglutarate + NH4(+) + NADPH + H(+). Functionally, catalyzes the reversible oxidative deamination of glutamate to alpha-ketoglutarate and ammonia. P.ruminicola possess both NADP(H)- and NAD(H)-dependent activities on the same enzyme, suggesting that both anabolic and catabolic forms of the enzyme might occur. This chain is NAD(P)-specific glutamate dehydrogenase (gdhA), found in Xylanibacter ruminicola (Prevotella ruminicola).